The following is a 158-amino-acid chain: 6,7-dimethyl-8-ribityllumazine synthase (158 aa).

Residues phenylalanine 22, alanine 56–glutamate 58, and valine 80–isoleucine 82 each bind 5-amino-6-(D-ribitylamino)uracil. Glutamate 85–threonine 86 contributes to the (2S)-2-hydroxy-3-oxobutyl phosphate binding site. The active-site Proton donor is histidine 88. 5-amino-6-(D-ribitylamino)uracil is bound at residue asparagine 113. Residue arginine 127 participates in (2S)-2-hydroxy-3-oxobutyl phosphate binding.

The protein belongs to the DMRL synthase family.

The catalysed reaction is (2S)-2-hydroxy-3-oxobutyl phosphate + 5-amino-6-(D-ribitylamino)uracil = 6,7-dimethyl-8-(1-D-ribityl)lumazine + phosphate + 2 H2O + H(+). Its pathway is cofactor biosynthesis; riboflavin biosynthesis; riboflavin from 2-hydroxy-3-oxobutyl phosphate and 5-amino-6-(D-ribitylamino)uracil: step 1/2. In terms of biological role, catalyzes the formation of 6,7-dimethyl-8-ribityllumazine by condensation of 5-amino-6-(D-ribitylamino)uracil with 3,4-dihydroxy-2-butanone 4-phosphate. This is the penultimate step in the biosynthesis of riboflavin. This chain is 6,7-dimethyl-8-ribityllumazine synthase, found in Neisseria meningitidis serogroup C / serotype 2a (strain ATCC 700532 / DSM 15464 / FAM18).